Reading from the N-terminus, the 101-residue chain is Stefin-C (101 aa).

Met-1 is subject to N-acetylmethionine. The Secondary area of contact motif lies at 49–53 (QVVAG).

Belongs to the cystatin family.

Its subcellular location is the cytoplasm. Strong inhibitor of papain and cathepsin L but poor inhibitor of cathepsin B. The chain is Stefin-C from Bos taurus (Bovine).